Reading from the N-terminus, the 287-residue chain is Myoblast determination protein 1 homolog B (287 aa).

The region spanning 96 to 147 (DRRRAATMRERRRLSKVNDAFETLKRCTSTNPNQRLPKVDILRNAISYIDSL) is the bHLH domain. 2 disordered regions span residues 161-202 (NMEH…FYTD) and 231-277 (QSPS…QLSH). Low complexity predominate over residues 168–188 (DSDASSPSSNCSDGMNSPPCS). Residues 267-277 (SPGNSCTQLSH) show a composition bias toward polar residues.

In terms of assembly, efficient DNA binding requires dimerization with another bHLH protein.

The protein resides in the nucleus. In terms of biological role, may act as a transcriptional activator that promotes transcription of muscle-specific target genes and plays a role in muscle differentiation. The sequence is that of Myoblast determination protein 1 homolog B (myod1-b) from Xenopus laevis (African clawed frog).